The sequence spans 592 residues: Aspartate--tRNA(Asp/Asn) ligase (592 aa).

Glu-182 serves as a coordination point for L-aspartate. The aspartate stretch occupies residues 206–209; it reads QIFK. Arg-228 contributes to the L-aspartate binding site. Residues 228 to 230 and Gln-237 contribute to the ATP site; that span reads RDE. His-455 serves as a coordination point for L-aspartate. Glu-489 is an ATP binding site. Position 496 (Arg-496) interacts with L-aspartate. An ATP-binding site is contributed by 541–544; the sequence is GLDR.

It belongs to the class-II aminoacyl-tRNA synthetase family. Type 1 subfamily. As to quaternary structure, homodimer.

The protein resides in the cytoplasm. It carries out the reaction tRNA(Asx) + L-aspartate + ATP = L-aspartyl-tRNA(Asx) + AMP + diphosphate. Its function is as follows. Aspartyl-tRNA synthetase with relaxed tRNA specificity since it is able to aspartylate not only its cognate tRNA(Asp) but also tRNA(Asn). Reaction proceeds in two steps: L-aspartate is first activated by ATP to form Asp-AMP and then transferred to the acceptor end of tRNA(Asp/Asn). The chain is Aspartate--tRNA(Asp/Asn) ligase from Thermoanaerobacter sp. (strain X514).